The following is a 427-amino-acid chain: MSAIVDIIGREVLDSRGNPTVECDVLLESGVMGRAAVPSGASTGSREAIELRDGDKSRYLGKGVLKAVEHINTEISEAIMGLDASEQAFLDRTLIDLDGTENKSRLGANAMLAVSMAVAKAAAEEAGLPLYRYFGGSGAMQMPVPMMNIVNGGAHANNSLDIQEFMVMPVGQSSFREALRCGAEIFHALKKILADKGMSTAVGDEGGFAPNFASNEECLNTILSAIEQAGYKAGEDVLLALDCAASEFYKDGKYHLEGEGLQLSSEDFANYLANLADKFPIVSIEDGMHESDWAGWKALTDKLGKKVQLVGDDLFVTNTKILKEGIEKGIANSILIKINQIGTLTETFAAIEMAKRAGYTAVISHRSGETEDSTIADIAVGTNAGQIKTGSLSRSDRMAKYNQLLRIEEDLGDIASYPGKSAFYNLR.

Glutamine 163 provides a ligand contact to (2R)-2-phosphoglycerate. Glutamate 205 acts as the Proton donor in catalysis. Mg(2+)-binding residues include aspartate 242, glutamate 285, and aspartate 312. (2R)-2-phosphoglycerate-binding residues include lysine 337, arginine 366, serine 367, and lysine 388. Lysine 337 functions as the Proton acceptor in the catalytic mechanism.

This sequence belongs to the enolase family. Requires Mg(2+) as cofactor.

It is found in the cytoplasm. The protein localises to the secreted. The protein resides in the cell surface. It carries out the reaction (2R)-2-phosphoglycerate = phosphoenolpyruvate + H2O. It participates in carbohydrate degradation; glycolysis; pyruvate from D-glyceraldehyde 3-phosphate: step 4/5. Its function is as follows. Catalyzes the reversible conversion of 2-phosphoglycerate (2-PG) into phosphoenolpyruvate (PEP). It is essential for the degradation of carbohydrates via glycolysis. The chain is Enolase from Ralstonia pickettii (strain 12J).